A 545-amino-acid chain; its full sequence is MTNTNRPIRRALVSVFHKEGIEVLAEAFVKAGTEVVSTGSTAKKLAELGVKVTEVSDVTGFPECLDGRVKTLHPYIHAGILADMTNPEHAKQLEEFGIKPFDLVVVNLYPFADTVRSGANEADTIEKIDIGGPSMVRGAAKNHATVAIVTDPADYALVASRVADGTGFSLDERKWLAAKAFAHTAAYDATINEWTAKHWPKPASLDAVEVDKDDQGTEVDPAKFPAQFTRTWDRAHTLRYGENSHQQAALYIDPLNQTGFAHAEQLGGKPMSYNNYVDADAAWRTVWDMAPAIAVAVVKHNNPCGLAIGATAAEAHKKAHACDPMSAYGGVIACNSKVTLEMAESVRPIFTEVIVAPDYEPAALELLQTKKKNLRILEVAEPPKGHEAIRQIDGGLLVQDTDLINAVGDDPDAWKLVAGEAADADTLKDLVFAWRAIRCVKSNAILLAHDQATVGIGMGQVNRVDSCHLAVERANTLADGADRATGAVAASDAFFPFADGAQVLIDAGVKAIVQPGGSIRDEEVIEAAKKAGVTMYLTGTRHFFH.

In terms of domain architecture, MGS-like spans 1–150 (MTNTNRPIRR…KNHATVAIVT (150 aa)).

Belongs to the PurH family.

The catalysed reaction is (6R)-10-formyltetrahydrofolate + 5-amino-1-(5-phospho-beta-D-ribosyl)imidazole-4-carboxamide = 5-formamido-1-(5-phospho-D-ribosyl)imidazole-4-carboxamide + (6S)-5,6,7,8-tetrahydrofolate. The enzyme catalyses IMP + H2O = 5-formamido-1-(5-phospho-D-ribosyl)imidazole-4-carboxamide. The protein operates within purine metabolism; IMP biosynthesis via de novo pathway; 5-formamido-1-(5-phospho-D-ribosyl)imidazole-4-carboxamide from 5-amino-1-(5-phospho-D-ribosyl)imidazole-4-carboxamide (10-formyl THF route): step 1/1. It functions in the pathway purine metabolism; IMP biosynthesis via de novo pathway; IMP from 5-formamido-1-(5-phospho-D-ribosyl)imidazole-4-carboxamide: step 1/1. This chain is Bifunctional purine biosynthesis protein PurH, found in Bifidobacterium longum (strain NCC 2705).